The following is a 535-amino-acid chain: Endogenous retrovirus group V member 2 Env polyprotein (535 aa).

Residues methionine 1–alanine 21 form the signal peptide. Residues glutamine 22 to alanine 321 are Extracellular-facing. N-linked (GlcNAc...) asparagine glycosylation is present at asparagine 68. The helical transmembrane segment at leucine 322 to phenylalanine 342 threads the bilayer. Over threonine 343 to tryptophan 456 the chain is Cytoplasmic. Residues phenylalanine 457–phenylalanine 477 form a helical membrane-spanning segment. The Extracellular segment spans residues phenylalanine 478–leucine 535.

The protein belongs to the gamma type-C retroviral envelope protein family. In terms of tissue distribution, expressed in placenta.

It is found in the membrane. This is Endogenous retrovirus group V member 2 Env polyprotein (ERVV-2) from Homo sapiens (Human).